Here is a 298-residue protein sequence, read N- to C-terminus: Bifunctional protein FolD (298 aa).

NADP(+)-binding positions include 166 to 168 (GRS), Ser-195, and Ile-236.

The protein belongs to the tetrahydrofolate dehydrogenase/cyclohydrolase family. As to quaternary structure, homodimer.

It catalyses the reaction (6R)-5,10-methylene-5,6,7,8-tetrahydrofolate + NADP(+) = (6R)-5,10-methenyltetrahydrofolate + NADPH. The enzyme catalyses (6R)-5,10-methenyltetrahydrofolate + H2O = (6R)-10-formyltetrahydrofolate + H(+). It functions in the pathway one-carbon metabolism; tetrahydrofolate interconversion. In terms of biological role, catalyzes the oxidation of 5,10-methylenetetrahydrofolate to 5,10-methenyltetrahydrofolate and then the hydrolysis of 5,10-methenyltetrahydrofolate to 10-formyltetrahydrofolate. The chain is Bifunctional protein FolD from Chlorobium phaeobacteroides (strain BS1).